Here is an 87-residue protein sequence, read N- to C-terminus: Retinal rod rhodopsin-sensitive cGMP 3',5'-cyclic phosphodiesterase subunit gamma (87 aa).

M1 carries the post-translational modification N-acetylmethionine. Residues 1 to 12 show a composition bias toward basic and acidic residues; sequence MNLEPPKAEIRS. A disordered region spans residues 1–55; sequence MNLEPPKAEIRSATRVIGGPVTPRKGPPKFKQRQTRQFKSKPPKKGVQGFGDDIP. The segment covering 26 to 44 has biased composition (basic residues); sequence GPPKFKQRQTRQFKSKPPK.

Belongs to the rod/cone cGMP-PDE gamma subunit family. As to quaternary structure, oligomer composed of two catalytic chains (alpha and beta), an inhibitory chain (gamma) and the delta chain.

It carries out the reaction 3',5'-cyclic GMP + H2O = GMP + H(+). Its function is as follows. Participates in processes of transmission and amplification of the visual signal. cGMP-PDEs are the effector molecules in G-protein-mediated phototransduction in vertebrate rods and cones. The sequence is that of Retinal rod rhodopsin-sensitive cGMP 3',5'-cyclic phosphodiesterase subunit gamma (PDE6G) from Canis lupus familiaris (Dog).